The following is a 101-amino-acid chain: ATP-dependent Clp protease adapter protein ClpS (101 aa).

It belongs to the ClpS family. In terms of assembly, binds to the N-terminal domain of the chaperone ClpA.

Involved in the modulation of the specificity of the ClpAP-mediated ATP-dependent protein degradation. The sequence is that of ATP-dependent Clp protease adapter protein ClpS from Clostridium acetobutylicum (strain ATCC 824 / DSM 792 / JCM 1419 / IAM 19013 / LMG 5710 / NBRC 13948 / NRRL B-527 / VKM B-1787 / 2291 / W).